The sequence spans 678 residues: uncharacterized protein (678 aa).

Transmembrane regions (helical) follow at residues 14 to 34 (LMFAGAGPGPMLAAASAWTGL) and 180 to 200 (GAVIIAGFPFLDLGNVTIGGF).

The protein belongs to the mycobacterial PPE family.

It localises to the cell membrane. This is an uncharacterized protein from Mycobacterium tuberculosis (strain CDC 1551 / Oshkosh).